The chain runs to 274 residues: Bis(5'-nucleosyl)-tetraphosphatase, symmetrical (274 aa).

The protein belongs to the Ap4A hydrolase family.

The enzyme catalyses P(1),P(4)-bis(5'-adenosyl) tetraphosphate + H2O = 2 ADP + 2 H(+). Functionally, hydrolyzes diadenosine 5',5'''-P1,P4-tetraphosphate to yield ADP. This Shewanella sp. (strain ANA-3) protein is Bis(5'-nucleosyl)-tetraphosphatase, symmetrical.